Reading from the N-terminus, the 239-residue chain is Aspartate/glutamate leucyltransferase (239 aa).

The protein belongs to the R-transferase family. Bpt subfamily.

The protein localises to the cytoplasm. It catalyses the reaction N-terminal L-glutamyl-[protein] + L-leucyl-tRNA(Leu) = N-terminal L-leucyl-L-glutamyl-[protein] + tRNA(Leu) + H(+). It carries out the reaction N-terminal L-aspartyl-[protein] + L-leucyl-tRNA(Leu) = N-terminal L-leucyl-L-aspartyl-[protein] + tRNA(Leu) + H(+). Its function is as follows. Functions in the N-end rule pathway of protein degradation where it conjugates Leu from its aminoacyl-tRNA to the N-termini of proteins containing an N-terminal aspartate or glutamate. This is Aspartate/glutamate leucyltransferase from Campylobacter jejuni subsp. jejuni serotype O:2 (strain ATCC 700819 / NCTC 11168).